A 109-amino-acid polypeptide reads, in one-letter code: MSQERLLSVLRAPHISEKATNNAEKSNTVVLKVALDANKAEIAAAVAQLFEVKVDSVRTVVVKGKTKRRGNKMGRRSDWKKAYVTLAKAKIWTSWTVQSNRRKLENGYR.

The protein belongs to the universal ribosomal protein uL23 family. As to quaternary structure, part of the 50S ribosomal subunit. Contacts protein L29, and trigger factor when it is bound to the ribosome.

Functionally, one of the early assembly proteins it binds 23S rRNA. One of the proteins that surrounds the polypeptide exit tunnel on the outside of the ribosome. Forms the main docking site for trigger factor binding to the ribosome. The protein is Large ribosomal subunit protein uL23 of Haemophilus influenzae (strain PittEE).